The sequence spans 237 residues: Pyridoxal phosphate homeostasis protein (237 aa).

Lys35 carries the post-translational modification N6-(pyridoxal phosphate)lysine.

Belongs to the pyridoxal phosphate-binding protein YggS/PROSC family.

In terms of biological role, pyridoxal 5'-phosphate (PLP)-binding protein, which is involved in PLP homeostasis. The chain is Pyridoxal phosphate homeostasis protein from Haemophilus influenzae (strain ATCC 51907 / DSM 11121 / KW20 / Rd).